Consider the following 233-residue polypeptide: Peroxisomal membrane protein 11-5 (233 aa).

Over 1–92 the chain is Cytoplasmic; the sequence is MSSLESARAD…PLILLGKSKN (92 aa). Residues 93 to 113 form a helical membrane-spanning segment; the sequence is ALLSTFLFLDQIVWAGRTGIY. Topologically, residues 114–206 are lumenal; that stretch reads KNKERAEFLS…LLQLAPKKVT (93 aa). A helical transmembrane segment spans residues 207–226; sequence PRVTGAFGFASSLIACYQLL.

Belongs to the peroxin-11 family. Expressed in seedlings, roots, shoots, leaf sheaths, flag leaf, panicles, spikelets, and endosperm.

It is found in the peroxisome membrane. Functionally, involved in peroxisomal proliferation. The chain is Peroxisomal membrane protein 11-5 (PEX11-5) from Oryza sativa subsp. japonica (Rice).